The primary structure comprises 168 residues: S-ribosylhomocysteine lyase (168 aa).

Residues His-54, His-58, and Cys-128 each contribute to the Fe cation site.

This sequence belongs to the LuxS family. In terms of assembly, homodimer. The cofactor is Fe cation.

It carries out the reaction S-(5-deoxy-D-ribos-5-yl)-L-homocysteine = (S)-4,5-dihydroxypentane-2,3-dione + L-homocysteine. In terms of biological role, involved in the synthesis of autoinducer 2 (AI-2) which is secreted by bacteria and is used to communicate both the cell density and the metabolic potential of the environment. The regulation of gene expression in response to changes in cell density is called quorum sensing. Catalyzes the transformation of S-ribosylhomocysteine (RHC) to homocysteine (HC) and 4,5-dihydroxy-2,3-pentadione (DPD). The chain is S-ribosylhomocysteine lyase from Neisseria meningitidis serogroup C / serotype 2a (strain ATCC 700532 / DSM 15464 / FAM18).